Reading from the N-terminus, the 326-residue chain is Thioredoxin reductase (326 aa).

40-47 contributes to the FAD binding site; the sequence is TGNNKGGQ. Cys141 and Cys144 are disulfide-bonded. FAD is bound at residue 291–300; the sequence is DVIDHVYKQA.

The protein belongs to the class-II pyridine nucleotide-disulfide oxidoreductase family. As to quaternary structure, homodimer. FAD serves as cofactor.

It localises to the cytoplasm. The enzyme catalyses [thioredoxin]-dithiol + NADP(+) = [thioredoxin]-disulfide + NADPH + H(+). This is Thioredoxin reductase (trxB) from Buchnera aphidicola subsp. Baizongia pistaciae (strain Bp).